The chain runs to 504 residues: Putative ribose/galactose/methyl galactoside import ATP-binding protein (504 aa).

ABC transporter domains follow at residues 5–242 (ISVK…GRNL) and 252–497 (TSAN…TRRE). Residue 37–44 (GENGAGKS) coordinates ATP.

The protein belongs to the ABC transporter superfamily. Carbohydrate importer 2 (CUT2) (TC 3.A.1.2) family.

The protein resides in the cell inner membrane. It carries out the reaction D-ribose(out) + ATP + H2O = D-ribose(in) + ADP + phosphate + H(+). The enzyme catalyses D-galactose(out) + ATP + H2O = D-galactose(in) + ADP + phosphate + H(+). In terms of biological role, part of an ABC transporter complex involved in carbohydrate import. Could be involved in ribose, galactose and/or methyl galactoside import. Responsible for energy coupling to the transport system. The protein is Putative ribose/galactose/methyl galactoside import ATP-binding protein of Albidiferax ferrireducens (strain ATCC BAA-621 / DSM 15236 / T118) (Rhodoferax ferrireducens).